A 244-amino-acid chain; its full sequence is tRNA (guanine-N(7)-)-methyltransferase (244 aa).

S-adenosyl-L-methionine-binding residues include E74, E99, D126, and D149. Residue D149 is part of the active site. Substrate-binding positions include K153, D185, and T222 to E225.

The protein belongs to the class I-like SAM-binding methyltransferase superfamily. TrmB family.

The catalysed reaction is guanosine(46) in tRNA + S-adenosyl-L-methionine = N(7)-methylguanosine(46) in tRNA + S-adenosyl-L-homocysteine. Its pathway is tRNA modification; N(7)-methylguanine-tRNA biosynthesis. Its function is as follows. Catalyzes the formation of N(7)-methylguanine at position 46 (m7G46) in tRNA. The polypeptide is tRNA (guanine-N(7)-)-methyltransferase (Colwellia psychrerythraea (strain 34H / ATCC BAA-681) (Vibrio psychroerythus)).